The following is a 90-amino-acid chain: Probable Fe(2+)-trafficking protein (90 aa).

The protein belongs to the Fe(2+)-trafficking protein family.

Functionally, could be a mediator in iron transactions between iron acquisition and iron-requiring processes, such as synthesis and/or repair of Fe-S clusters in biosynthetic enzymes. This is Probable Fe(2+)-trafficking protein from Bordetella bronchiseptica (strain ATCC BAA-588 / NCTC 13252 / RB50) (Alcaligenes bronchisepticus).